Consider the following 205-residue polypeptide: MKNYHDIVLALAGVCQSAKLVHQLATESRADSETFLTALNSLFITQPQRIEDVFGGEVRHLKLGLETLIHQLNAQGDQNLTRYWLSLLALEGKLSKNSDAKQTLGNRISRLKEQEIHYARDSETMLSIMANIYSDIISPLGKKIHILGSPDYLRQELVQNKIRAVLLAGIRSAVLWKQMGGTKWQILFFRRKLLATAKQIYSSIY.

It belongs to the HflD family.

The protein resides in the cytoplasm. Its subcellular location is the cell inner membrane. This is High frequency lysogenization protein HflD homolog from Haemophilus influenzae (strain ATCC 51907 / DSM 11121 / KW20 / Rd).